The primary structure comprises 70 residues: Mu-agatoxin-Ao1a (70 aa).

The N-terminal stretch at 1-20 (MKAIIFFCFLSVMVFIVAEA) is a signal peptide. The propeptide occupies 21–33 (SSLEALKIFEGER). Intrachain disulfides connect cysteine 35-cysteine 50, cysteine 42-cysteine 55, cysteine 49-cysteine 65, and cysteine 57-cysteine 63. Asparagine 69 carries the post-translational modification Asparagine amide.

Belongs to the neurotoxin 07 (Beta/delta-agtx) family. 04 (aga-5) subfamily. Expressed by the venom gland.

The protein localises to the secreted. Its function is as follows. Insecticidal neurotoxin that modulates the insect Nav channel (DmNaV1/tipE (para/tipE)) in a unique manner, with both the activation and inactivation processes being affected. The voltage dependence of activation is shifted toward more hyperpolarized potentials (analogous to site 4 toxins) and a non-inactivating persistent sodium current is induced (site 3-like action). Interestingly, both effects take place in a voltage-dependent manner, producing a bell-shaped curve between -80 and 0 mV. The polypeptide is Mu-agatoxin-Ao1a (Agelena orientalis (Funnel-web spider)).